Consider the following 1389-residue polypeptide: DNA-directed RNA polymerase subunit beta'' (1389 aa).

Zn(2+) contacts are provided by C224, C295, C302, and C305.

The protein belongs to the RNA polymerase beta' chain family. RpoC2 subfamily. As to quaternary structure, in plastids the minimal PEP RNA polymerase catalytic core is composed of four subunits: alpha, beta, beta', and beta''. When a (nuclear-encoded) sigma factor is associated with the core the holoenzyme is formed, which can initiate transcription. Requires Zn(2+) as cofactor.

The protein localises to the plastid. The protein resides in the chloroplast. It carries out the reaction RNA(n) + a ribonucleoside 5'-triphosphate = RNA(n+1) + diphosphate. In terms of biological role, DNA-dependent RNA polymerase catalyzes the transcription of DNA into RNA using the four ribonucleoside triphosphates as substrates. The chain is DNA-directed RNA polymerase subunit beta'' from Morus indica (Mulberry).